Consider the following 140-residue polypeptide: 3-hydroxyacyl-[acyl-carrier-protein] dehydratase FabZ (140 aa).

Residue His48 is part of the active site.

The protein belongs to the thioester dehydratase family. FabZ subfamily.

Its subcellular location is the cytoplasm. The enzyme catalyses a (3R)-hydroxyacyl-[ACP] = a (2E)-enoyl-[ACP] + H2O. Functionally, involved in unsaturated fatty acids biosynthesis. Catalyzes the dehydration of short chain beta-hydroxyacyl-ACPs and long chain saturated and unsaturated beta-hydroxyacyl-ACPs. In Latilactobacillus sakei subsp. sakei (strain 23K) (Lactobacillus sakei subsp. sakei), this protein is 3-hydroxyacyl-[acyl-carrier-protein] dehydratase FabZ.